Reading from the N-terminus, the 206-residue chain is Small ribosomal subunit protein uS4 (206 aa).

Positions 96–156 (CRLDNVVYRM…EKSKNQLRIA (61 aa)) constitute an S4 RNA-binding domain.

This sequence belongs to the universal ribosomal protein uS4 family. As to quaternary structure, part of the 30S ribosomal subunit. Contacts protein S5. The interaction surface between S4 and S5 is involved in control of translational fidelity.

One of the primary rRNA binding proteins, it binds directly to 16S rRNA where it nucleates assembly of the body of the 30S subunit. In terms of biological role, with S5 and S12 plays an important role in translational accuracy. The polypeptide is Small ribosomal subunit protein uS4 (Ectopseudomonas mendocina (strain ymp) (Pseudomonas mendocina)).